Consider the following 407-residue polypeptide: Ribosomal protein uL3-like (407 aa).

The segment covering 1 to 31 (MSHRKFSAPRHGHLGFLPHKRSHRHRGKVKT) has biased composition (basic residues). 2 disordered regions span residues 1–35 (MSHR…WPRD) and 387–407 (AFMG…SGDL).

The protein belongs to the universal ribosomal protein uL3 family. Component of the large ribosomal subunit in striated muscle cells.

Functionally, heart- and skeletal muscle-specific component of the ribosome, which regulates muscle function. Component of the large ribosomal subunit in striated muscle cells: replaces the RPL3 paralog in the ribosome in these cells. The ribosome is a large ribonucleoprotein complex responsible for the synthesis of proteins in the cell. Inhibits myotube growth and muscle function. The sequence is that of Ribosomal protein uL3-like from Homo sapiens (Human).